The chain runs to 138 residues: Putative pre-16S rRNA nuclease (138 aa).

This sequence belongs to the YqgF nuclease family.

It localises to the cytoplasm. Functionally, could be a nuclease involved in processing of the 5'-end of pre-16S rRNA. This Karelsulcia muelleri (strain GWSS) (Sulcia muelleri) protein is Putative pre-16S rRNA nuclease.